The primary structure comprises 144 residues: Globin-1 (144 aa).

Positions 1–141 constitute a Globin domain; it reads VSANDIKNVQ…ILHQMSSYFA (141 aa). Heme b is bound at residue histidine 89.

Belongs to the globin family. Homodimer.

This chain is Globin-1, found in Phreagena soyoae (Deep-sea cold-seep clam).